The primary structure comprises 41 residues: Large ribosomal subunit protein bL36 (41 aa).

This sequence belongs to the bacterial ribosomal protein bL36 family.

The chain is Large ribosomal subunit protein bL36 from Xylella fastidiosa (strain 9a5c).